The chain runs to 130 residues: Small ribosomal subunit protein uS8 (130 aa).

Belongs to the universal ribosomal protein uS8 family. Part of the 30S ribosomal subunit. Contacts proteins S5 and S12.

One of the primary rRNA binding proteins, it binds directly to 16S rRNA central domain where it helps coordinate assembly of the platform of the 30S subunit. This is Small ribosomal subunit protein uS8 from Aster yellows witches'-broom phytoplasma (strain AYWB).